The primary structure comprises 301 residues: Mitochondrial carnitine/acylcarnitine carrier protein (301 aa).

Ala2 is modified (N-acetylalanine). Residues 2–12 lie on the Cytoplasmic side of the membrane; the sequence is ADQPKPISPLK. Solcar repeat units follow at residues 8–99, 108–196, and 207–293; these read ISPL…GKKL, LSYP…LKNI, and LSAP…AMKF. The chain crosses the membrane as a helical span at residues 13-31; the sequence is NLLAGGFGGVCLVFVGHPL. Residues 32–73 are Mitochondrial matrix-facing; it reads DTVKVRLQTQPPSLPGQPPMYSGTFDCFRKTLFREGITGLYR. Residues 74-93 form a helical membrane-spanning segment; it reads GMAAPIIGVTPMFAVCFFGF. The Cytoplasmic portion of the chain corresponds to 94-112; the sequence is GLGKKLQQKHPEDVLSYPQ. The helical transmembrane segment at 113-131 threads the bilayer; it reads LFAAGMLSGVFTTGIMTPG. The Mitochondrial matrix portion of the chain corresponds to 132-170; the sequence is ERIKCLLQIQASSGESKYTGTLDCAKKLYQEFGIRGIYK. 2 positions are modified to N6-acetyllysine: Lys148 and Lys157. Lys170 carries the N6-acetyllysine; alternate modification. Residue Lys170 is modified to N6-succinyllysine; alternate. Residues 171 to 190 form a helical membrane-spanning segment; sequence GTVLTLMRDVPASGMYFMTY. Residues 191–211 lie on the Cytoplasmic side of the membrane; that stretch reads EWLKNIFTPEGKRVSELSAPR. Residues 212-230 form a helical membrane-spanning segment; the sequence is ILVAGGIAGIFNWAVAIPP. Residues 231 to 267 are Mitochondrial matrix-facing; the sequence is DVLKSRFQTAPPGKYPNGFRDVLRELIRDEGVTSLYK. A helical transmembrane segment spans residues 268–287; the sequence is GFNAVMIRAFPANAACFLGF. Residues 288–301 are Cytoplasmic-facing; it reads EVAMKFLNWATPNL.

It belongs to the mitochondrial carrier (TC 2.A.29) family.

The protein resides in the mitochondrion inner membrane. The catalysed reaction is O-acetyl-(R)-carnitine(in) + (R)-carnitine(out) = O-acetyl-(R)-carnitine(out) + (R)-carnitine(in). It catalyses the reaction an O-acyl-(R)-carnitine(in) + (R)-carnitine(out) = an O-acyl-(R)-carnitine(out) + (R)-carnitine(in). It carries out the reaction O-propanoyl-(R)-carnitine(in) + (R)-carnitine(out) = O-propanoyl-(R)-carnitine(out) + (R)-carnitine(in). The enzyme catalyses O-hexadecanoyl-(R)-carnitine(in) + (R)-carnitine(out) = O-hexadecanoyl-(R)-carnitine(out) + (R)-carnitine(in). The catalysed reaction is O-octanoyl-(R)-carnitine(in) + (R)-carnitine(out) = O-octanoyl-(R)-carnitine(out) + (R)-carnitine(in). It catalyses the reaction (R)-carnitine(in) = (R)-carnitine(out). Mediates the electroneutral exchange of acylcarnitines (O-acyl-(R)-carnitine or L-acylcarnitine) of different acyl chain lengths (ranging from O-acetyl-(R)-carnitine to long-chain O-acyl-(R)-carnitines) with free carnitine ((R)-carnitine or L-carnitine) across the mitochondrial inner membrane, via a ping-pong mechanism. Key player in the mitochondrial oxidation pathway, it translocates the fatty acids in the form of acylcarnitines into the mitochondrial matrix, where the carnitine palmitoyltransferase 2 (CPT-2) activates them to undergo fatty acid beta-oxidation. Catalyzes the unidirectional transport (uniport) of carnitine at lower rates than the antiport (exchange). This Homo sapiens (Human) protein is Mitochondrial carnitine/acylcarnitine carrier protein.